The following is a 63-amino-acid chain: uncharacterized protein (63 aa).

This is an uncharacterized protein from Avena byzantina (Oat).